The sequence spans 251 residues: tRNA pseudouridine synthase A (251 aa).

The active-site Nucleophile is the Asp-54. Tyr-111 is a binding site for substrate.

This sequence belongs to the tRNA pseudouridine synthase TruA family. In terms of assembly, homodimer.

It catalyses the reaction uridine(38/39/40) in tRNA = pseudouridine(38/39/40) in tRNA. Functionally, formation of pseudouridine at positions 38, 39 and 40 in the anticodon stem and loop of transfer RNAs. The sequence is that of tRNA pseudouridine synthase A from Mycoplasma mycoides subsp. mycoides SC (strain CCUG 32753 / NCTC 10114 / PG1).